The chain runs to 537 residues: uncharacterized protein (537 aa).

4 disordered regions span residues 1–33 (MEPG…ILAF), 71–98 (SSPP…RKRQ), 197–220 (SHNN…SEEK), and 516–537 (GRQR…EEQN). Ser72 is subject to Phosphoserine. Basic and acidic residues predominate over residues 88–98 (SRVDSEARKRQ). Over residues 197 to 214 (SHNNMASSNTQSNTQLSE) the composition is skewed to polar residues. Basic residues predominate over residues 516–529 (GRQRSSRYKSHVHK).

This sequence belongs to the NAD kinase family.

This is an uncharacterized protein from Schizosaccharomyces pombe (strain 972 / ATCC 24843) (Fission yeast).